The chain runs to 256 residues: Imidazole glycerol phosphate synthase subunit HisF (256 aa).

Residues aspartate 12 and aspartate 131 contribute to the active site.

It belongs to the HisA/HisF family. As to quaternary structure, heterodimer of HisH and HisF.

The protein resides in the cytoplasm. It catalyses the reaction 5-[(5-phospho-1-deoxy-D-ribulos-1-ylimino)methylamino]-1-(5-phospho-beta-D-ribosyl)imidazole-4-carboxamide + L-glutamine = D-erythro-1-(imidazol-4-yl)glycerol 3-phosphate + 5-amino-1-(5-phospho-beta-D-ribosyl)imidazole-4-carboxamide + L-glutamate + H(+). It functions in the pathway amino-acid biosynthesis; L-histidine biosynthesis; L-histidine from 5-phospho-alpha-D-ribose 1-diphosphate: step 5/9. Functionally, IGPS catalyzes the conversion of PRFAR and glutamine to IGP, AICAR and glutamate. The HisF subunit catalyzes the cyclization activity that produces IGP and AICAR from PRFAR using the ammonia provided by the HisH subunit. This is Imidazole glycerol phosphate synthase subunit HisF from Micrococcus luteus (strain ATCC 4698 / DSM 20030 / JCM 1464 / CCM 169 / CCUG 5858 / IAM 1056 / NBRC 3333 / NCIMB 9278 / NCTC 2665 / VKM Ac-2230) (Micrococcus lysodeikticus).